Here is a 329-residue protein sequence, read N- to C-terminus: Beta-ketoacyl-[acyl-carrier-protein] synthase III (329 aa).

Active-site residues include Cys-123 and His-256. The tract at residues 257-261 (QANIR) is ACP-binding. Asn-286 is a catalytic residue.

Belongs to the thiolase-like superfamily. FabH family. In terms of assembly, homodimer.

It localises to the cytoplasm. The enzyme catalyses malonyl-[ACP] + acetyl-CoA + H(+) = 3-oxobutanoyl-[ACP] + CO2 + CoA. Its pathway is lipid metabolism; fatty acid biosynthesis. Its function is as follows. Catalyzes the condensation reaction of fatty acid synthesis by the addition to an acyl acceptor of two carbons from malonyl-ACP. Catalyzes the first condensation reaction which initiates fatty acid synthesis and may therefore play a role in governing the total rate of fatty acid production. Possesses both acetoacetyl-ACP synthase and acetyl transacylase activities. Its substrate specificity determines the biosynthesis of branched-chain and/or straight-chain of fatty acids. The polypeptide is Beta-ketoacyl-[acyl-carrier-protein] synthase III (Burkholderia mallei (strain NCTC 10247)).